Here is a 212-residue protein sequence, read N- to C-terminus: LexA repressor (212 aa).

The segment at residues 26 to 46 (VREIGEAVGLSSTSTVHGHID) is a DNA-binding region (H-T-H motif). Active-site for autocatalytic cleavage activity residues include Ser-128 and Lys-171.

This sequence belongs to the peptidase S24 family. Homodimer.

It catalyses the reaction Hydrolysis of Ala-|-Gly bond in repressor LexA.. Represses a number of genes involved in the response to DNA damage (SOS response), including recA and lexA. In the presence of single-stranded DNA, RecA interacts with LexA causing an autocatalytic cleavage which disrupts the DNA-binding part of LexA, leading to derepression of the SOS regulon and eventually DNA repair. In Oenococcus oeni (strain ATCC BAA-331 / PSU-1), this protein is LexA repressor.